A 205-amino-acid polypeptide reads, in one-letter code: Imidazole glycerol phosphate synthase subunit HisH (205 aa).

In terms of domain architecture, Glutamine amidotransferase type-1 spans Met-1–Ala-205. Catalysis depends on Cys-79, which acts as the Nucleophile. Residues His-182 and Glu-184 contribute to the active site.

As to quaternary structure, heterodimer of HisH and HisF.

The protein localises to the cytoplasm. It catalyses the reaction 5-[(5-phospho-1-deoxy-D-ribulos-1-ylimino)methylamino]-1-(5-phospho-beta-D-ribosyl)imidazole-4-carboxamide + L-glutamine = D-erythro-1-(imidazol-4-yl)glycerol 3-phosphate + 5-amino-1-(5-phospho-beta-D-ribosyl)imidazole-4-carboxamide + L-glutamate + H(+). The enzyme catalyses L-glutamine + H2O = L-glutamate + NH4(+). It functions in the pathway amino-acid biosynthesis; L-histidine biosynthesis; L-histidine from 5-phospho-alpha-D-ribose 1-diphosphate: step 5/9. Functionally, IGPS catalyzes the conversion of PRFAR and glutamine to IGP, AICAR and glutamate. The HisH subunit catalyzes the hydrolysis of glutamine to glutamate and ammonia as part of the synthesis of IGP and AICAR. The resulting ammonia molecule is channeled to the active site of HisF. In Rhodopirellula baltica (strain DSM 10527 / NCIMB 13988 / SH1), this protein is Imidazole glycerol phosphate synthase subunit HisH.